The sequence spans 260 residues: Exosome complex component Rrp42 (260 aa).

It belongs to the RNase PH family. Rrp42 subfamily. As to quaternary structure, component of the archaeal exosome complex. Forms a hexameric ring-like arrangement composed of 3 Rrp41-Rrp42 heterodimers. The hexameric ring associates with a trimer of Rrp4 and/or Csl4 subunits.

The protein resides in the cytoplasm. Non-catalytic component of the exosome, which is a complex involved in RNA degradation. Contributes to the structuring of the Rrp41 active site. In Thermoplasma acidophilum (strain ATCC 25905 / DSM 1728 / JCM 9062 / NBRC 15155 / AMRC-C165), this protein is Exosome complex component Rrp42.